The primary structure comprises 120 residues: Ribosome-binding factor A (120 aa).

Belongs to the RbfA family. In terms of assembly, monomer. Binds 30S ribosomal subunits, but not 50S ribosomal subunits or 70S ribosomes.

It is found in the cytoplasm. One of several proteins that assist in the late maturation steps of the functional core of the 30S ribosomal subunit. Associates with free 30S ribosomal subunits (but not with 30S subunits that are part of 70S ribosomes or polysomes). Required for efficient processing of 16S rRNA. May interact with the 5'-terminal helix region of 16S rRNA. The chain is Ribosome-binding factor A from Fusobacterium nucleatum subsp. nucleatum (strain ATCC 25586 / DSM 15643 / BCRC 10681 / CIP 101130 / JCM 8532 / KCTC 2640 / LMG 13131 / VPI 4355).